Reading from the N-terminus, the 947-residue chain is Valine--tRNA ligase (947 aa).

Positions 45-55 (PNVTGSLHMGH) match the 'HIGH' region motif. A 'KMSKS' region motif is present at residues 591–595 (KMSKS). K594 is a binding site for ATP.

This sequence belongs to the class-I aminoacyl-tRNA synthetase family. ValS type 1 subfamily. Monomer.

It localises to the cytoplasm. The catalysed reaction is tRNA(Val) + L-valine + ATP = L-valyl-tRNA(Val) + AMP + diphosphate. Its function is as follows. Catalyzes the attachment of valine to tRNA(Val). As ValRS can inadvertently accommodate and process structurally similar amino acids such as threonine, to avoid such errors, it has a 'posttransfer' editing activity that hydrolyzes mischarged Thr-tRNA(Val) in a tRNA-dependent manner. This chain is Valine--tRNA ligase, found in Rhizobium meliloti (strain 1021) (Ensifer meliloti).